A 216-amino-acid chain; its full sequence is MALCLKQVFAKDKTFRPRKRFEPGTQRFELYKKAQASLKSGLDLRSVVRLPPGESIDDWIAVHVVDFFNRINLIYGTMAEHCSESSCPVMAGGPRYEYRWQDERQYRRPAKLSAPRYMALLMDWIEGLINDEDVFPTRVGVPFPKNFQQVCTKILTRLFRVFVHVYIHHFDSILSMGAEAHVNTCYKHFYYFIQEFSLVDQRELEPLREMTERICH.

Residues cysteine 82, cysteine 87, histidine 164, and histidine 169 each contribute to the Zn(2+) site.

The protein belongs to the MOB1/phocein family.

In terms of biological role, may regulate the activity of kinases. This chain is MOB kinase activator 3C (Mob3c), found in Mus musculus (Mouse).